The following is a 3332-amino-acid chain: Nonribosomal peptide synthetase imqB (3332 aa).

The tract at residues 230 to 622 is adenylation 1; that stretch reads FSEQVKAHPG…IGRKDTQVKV (393 aa). In terms of domain architecture, Carrier 1 spans 764–846; the sequence is GRITPQEKLL…DMARCITRVD (83 aa). Ser801 is modified (O-(pantetheine 4'-phosphoryl)serine). The condensation 1 stretch occupies residues 886–1314; sequence DIYPCTPLQE…NCLTRKELHQ (429 aa). The segment at 1336 to 1740 is adenylation 2; it reads EVSNTRPTAP…GRKDRQLKVR (405 aa). The 75-residue stretch at 1880-1954 folds into the Carrier 2 domain; that stretch reads AIATPKEEKL…EMAEKAAETG (75 aa). Residue Ser1915 is modified to O-(pantetheine 4'-phosphoryl)serine. The interval 1992-2402 is condensation 2; that stretch reads EDIYPCTPLQ…CLSEIDTQQI (411 aa). Residues 2422–2819 form an adenylation 3 region; that stretch reads AQQAREHPAT…GRKDTQVKIR (398 aa). A Carrier 3 domain is found at 2963–3039; sequence EVATNDEAAV…DLASRIGRVE (77 aa). Ser3000 is modified (O-(pantetheine 4'-phosphoryl)serine). Residues 3058–3323 are thioesterase (TE) domain; it reads SSNPTLIQGQ…ETTRHIRDFC (266 aa).

It belongs to the NRP synthetase family.

The protein operates within secondary metabolite biosynthesis. Its function is as follows. Nonribosomal peptide synthetase; part of the gene cluster that mediates the biosynthesis of imizoquins A to D, tripeptide-derived alkaloids that serve a protective role against oxidative stress that are essential for normal germination. ImqB is a canonical three-module NRPS that assembles the tripeptide backbone of the imizoquins via condensation of Trp, Tyr, and Leu-derived precursors. N-methylation by imqF and phenol oxidation by imqC, followed by cyclization via the FAD-dependent oxidase imqH carry out the three-step transformation of L-tyrosine into tetrahydroisoquinoline. Importantly, this sequence requires the presence of a free amine in the tyrosine moiety, indicating that isoquinoline formation occurs prior to peptide bond formation. The imidazolidin-4-one ring of imizoquins could form following additional oxidation of the methyl-derived bridgehead carbon by imqH. Lastly, O-methylation by imqG and leucine hydroxylation by imqE complete biosynthesis of the imizoquins. The polypeptide is Nonribosomal peptide synthetase imqB (Aspergillus flavus (strain ATCC 200026 / FGSC A1120 / IAM 13836 / NRRL 3357 / JCM 12722 / SRRC 167)).